We begin with the raw amino-acid sequence, 83 residues long: RNA-binding protein Hfq (83 aa).

In terms of domain architecture, Sm spans 10–70 (DTFLNQVRKE…ISTVMPLRPI (61 aa)).

It belongs to the Hfq family. Homohexamer.

In terms of biological role, RNA chaperone that binds small regulatory RNA (sRNAs) and mRNAs to facilitate mRNA translational regulation in response to envelope stress, environmental stress and changes in metabolite concentrations. Also binds with high specificity to tRNAs. The polypeptide is RNA-binding protein Hfq (Desulfitobacterium hafniense (strain DSM 10664 / DCB-2)).